Consider the following 190-residue polypeptide: Ribose 1,5-bisphosphate phosphokinase PhnN (190 aa).

Residues 135–159 (RGREPEPGIGQRLARPDPAPGHQAD) form a disordered region.

It belongs to the ribose 1,5-bisphosphokinase family.

It carries out the reaction alpha-D-ribose 1,5-bisphosphate + ATP = 5-phospho-alpha-D-ribose 1-diphosphate + ADP. It participates in metabolic intermediate biosynthesis; 5-phospho-alpha-D-ribose 1-diphosphate biosynthesis; 5-phospho-alpha-D-ribose 1-diphosphate from D-ribose 5-phosphate (route II): step 3/3. Functionally, catalyzes the phosphorylation of ribose 1,5-bisphosphate to 5-phospho-D-ribosyl alpha-1-diphosphate (PRPP). This is Ribose 1,5-bisphosphate phosphokinase PhnN from Pseudofrankia inefficax (strain DSM 45817 / CECT 9037 / DDB 130130 / EuI1c) (Frankia inefficax).